The chain runs to 386 residues: Acetate kinase (386 aa).

Asn-7 lines the Mg(2+) pocket. Lys-14 is an ATP binding site. Arg-78 contacts substrate. Asp-135 (proton donor/acceptor) is an active-site residue. ATP contacts are provided by residues 195 to 199 (HLGNG), 268 to 270 (DMR), and 316 to 320 (GIGEN). Residue Glu-370 participates in Mg(2+) binding.

It belongs to the acetokinase family. In terms of assembly, homodimer. Mg(2+) serves as cofactor. Mn(2+) is required as a cofactor.

Its subcellular location is the cytoplasm. The catalysed reaction is acetate + ATP = acetyl phosphate + ADP. Its pathway is metabolic intermediate biosynthesis; acetyl-CoA biosynthesis; acetyl-CoA from acetate: step 1/2. Functionally, catalyzes the formation of acetyl phosphate from acetate and ATP. Can also catalyze the reverse reaction. The protein is Acetate kinase of Pseudarthrobacter chlorophenolicus (strain ATCC 700700 / DSM 12829 / CIP 107037 / JCM 12360 / KCTC 9906 / NCIMB 13794 / A6) (Arthrobacter chlorophenolicus).